We begin with the raw amino-acid sequence, 100 residues long: Aspartyl/glutamyl-tRNA(Asn/Gln) amidotransferase subunit C (100 aa).

This sequence belongs to the GatC family. Heterotrimer of A, B and C subunits.

The enzyme catalyses L-glutamyl-tRNA(Gln) + L-glutamine + ATP + H2O = L-glutaminyl-tRNA(Gln) + L-glutamate + ADP + phosphate + H(+). It carries out the reaction L-aspartyl-tRNA(Asn) + L-glutamine + ATP + H2O = L-asparaginyl-tRNA(Asn) + L-glutamate + ADP + phosphate + 2 H(+). Functionally, allows the formation of correctly charged Asn-tRNA(Asn) or Gln-tRNA(Gln) through the transamidation of misacylated Asp-tRNA(Asn) or Glu-tRNA(Gln) in organisms which lack either or both of asparaginyl-tRNA or glutaminyl-tRNA synthetases. The reaction takes place in the presence of glutamine and ATP through an activated phospho-Asp-tRNA(Asn) or phospho-Glu-tRNA(Gln). This is Aspartyl/glutamyl-tRNA(Asn/Gln) amidotransferase subunit C from Streptococcus pyogenes serotype M49 (strain NZ131).